The sequence spans 764 residues: 5-methyltetrahydropteroyltriglutamate--homocysteine methyltransferase (764 aa).

Residues Arg-16–Lys-19 and Lys-121 contribute to the 5-methyltetrahydropteroyltri-L-glutamate site. L-homocysteine is bound by residues Ile-440–Ser-442 and Glu-493. Residues Ile-440–Ser-442 and Glu-493 contribute to the L-methionine site. 5-methyltetrahydropteroyltri-L-glutamate-binding positions include Arg-524–Cys-525 and Trp-570. Asp-608 is a binding site for L-homocysteine. Residue Asp-608 coordinates L-methionine. Glu-614 is a 5-methyltetrahydropteroyltri-L-glutamate binding site. Residues His-650, Cys-652, and Glu-674 each coordinate Zn(2+). His-703 serves as the catalytic Proton donor. Residue Cys-735 participates in Zn(2+) binding.

This sequence belongs to the vitamin-B12 independent methionine synthase family. Zn(2+) serves as cofactor.

It carries out the reaction 5-methyltetrahydropteroyltri-L-glutamate + L-homocysteine = tetrahydropteroyltri-L-glutamate + L-methionine. It functions in the pathway amino-acid biosynthesis; L-methionine biosynthesis via de novo pathway; L-methionine from L-homocysteine (MetE route): step 1/1. Functionally, catalyzes the transfer of a methyl group from 5-methyltetrahydrofolate to homocysteine resulting in methionine formation. The protein is 5-methyltetrahydropteroyltriglutamate--homocysteine methyltransferase of Burkholderia cenocepacia (strain ATCC BAA-245 / DSM 16553 / LMG 16656 / NCTC 13227 / J2315 / CF5610) (Burkholderia cepacia (strain J2315)).